Reading from the N-terminus, the 511-residue chain is 2'-5'-oligoadenylate synthase-like protein 1 (511 aa).

Ubiquitin-like domains follow at residues 350–429 (IQVT…ISPE) and 430–506 (IQVF…EGAA).

Belongs to the 2-5A synthase family. Specifically interacts with the ligand binding domain of the thyroid receptor (TR). TRIP14 does not require the presence of thyroid hormone for its interaction. Binds MBD1.

Its subcellular location is the nucleus. The protein resides in the nucleolus. It is found in the cytoplasm. Its function is as follows. Does not have 2'-5'-OAS activity, but can bind double-stranded RNA. Displays antiviral activity via an alternative antiviral pathway independent of RNase L. This Mus musculus (Mouse) protein is 2'-5'-oligoadenylate synthase-like protein 1 (Oasl1).